A 1372-amino-acid polypeptide reads, in one-letter code: DNA-directed RNA polymerase subunit beta (1372 aa).

The protein belongs to the RNA polymerase beta chain family. The RNAP catalytic core consists of 2 alpha, 1 beta, 1 beta' and 1 omega subunit. When a sigma factor is associated with the core the holoenzyme is formed, which can initiate transcription.

The enzyme catalyses RNA(n) + a ribonucleoside 5'-triphosphate = RNA(n+1) + diphosphate. DNA-dependent RNA polymerase catalyzes the transcription of DNA into RNA using the four ribonucleoside triphosphates as substrates. In Rickettsia bellii (strain RML369-C), this protein is DNA-directed RNA polymerase subunit beta.